The primary structure comprises 170 residues: NADH-dependent flavin reductase StyB (170 aa).

Belongs to the non-flavoprotein flavin reductase family. In terms of assembly, homodimer.

It carries out the reaction a reduced flavin + NAD(+) = an oxidized flavin + NADH + 2 H(+). The protein operates within aromatic compound metabolism. Its function is as follows. Reductase component of a two-component system that catalyzes the first step in the aerobic styrene degradation pathway by enantioselective epoxidation of the vinyl side chain. Utilizes NADH to reduce FAD, which is then transferred to the styrene monooxygenase StyA. This chain is NADH-dependent flavin reductase StyB (styB), found in Pseudomonas fluorescens.